The sequence spans 331 residues: Ribosomal RNA small subunit methyltransferase H (331 aa).

S-adenosyl-L-methionine is bound by residues 48–50, Asp67, Asp115, and Gln122; that span reads GGH. The segment at 297 to 331 is disordered; it reads RGTEKPTEEEISENRRASSAKVRAVEKIRTSRTTA. A compositionally biased stretch (basic and acidic residues) spans 298–312; the sequence is GTEKPTEEEISENRR.

This sequence belongs to the methyltransferase superfamily. RsmH family.

Its subcellular location is the cytoplasm. The catalysed reaction is cytidine(1402) in 16S rRNA + S-adenosyl-L-methionine = N(4)-methylcytidine(1402) in 16S rRNA + S-adenosyl-L-homocysteine + H(+). Functionally, specifically methylates the N4 position of cytidine in position 1402 (C1402) of 16S rRNA. The chain is Ribosomal RNA small subunit methyltransferase H from Micrococcus luteus (strain ATCC 4698 / DSM 20030 / JCM 1464 / CCM 169 / CCUG 5858 / IAM 1056 / NBRC 3333 / NCIMB 9278 / NCTC 2665 / VKM Ac-2230) (Micrococcus lysodeikticus).